Reading from the N-terminus, the 296-residue chain is tRNA dimethylallyltransferase (296 aa).

2 to 9 is a binding site for ATP; the sequence is GPTASGKT. Position 4 to 9 (4 to 9) interacts with substrate; it reads TASGKT. Interaction with substrate tRNA regions lie at residues 27–30, 151–155, and 232–237; these read DSAL, QRLAR, and RCVGYR.

Belongs to the IPP transferase family. Monomer. The cofactor is Mg(2+).

It catalyses the reaction adenosine(37) in tRNA + dimethylallyl diphosphate = N(6)-dimethylallyladenosine(37) in tRNA + diphosphate. In terms of biological role, catalyzes the transfer of a dimethylallyl group onto the adenine at position 37 in tRNAs that read codons beginning with uridine, leading to the formation of N6-(dimethylallyl)adenosine (i(6)A). This Shewanella pealeana (strain ATCC 700345 / ANG-SQ1) protein is tRNA dimethylallyltransferase.